The primary structure comprises 359 residues: Insulin gene enhancer protein isl-2a (359 aa).

2 consecutive LIM zinc-binding domains span residues 27-80 and 30-143; these read CVGC…CKRD and CGSQ…RADH. Positions 171–190 are disordered; it reads EPVPVRQPPHRNHVHKQSEK. A DNA-binding region (homeobox) is located at residues 191–250; it reads TTRVRTVLNEKQLHTLRTCYNANPRPDALMKEQLVEMTGLSPRVIRVWFQNKRCKDKKKS. Positions 326 to 336 are enriched in low complexity; that stretch reads ESGSLGNSSGS. The interval 326-359 is disordered; sequence ESGSLGNSSGSDVTSLSSQLPDTPNSMVPSPVET. The span at 337–359 shows a compositional bias: polar residues; it reads DVTSLSSQLPDTPNSMVPSPVET.

The protein localises to the nucleus. Functionally, binds to one of the cis-acting domain of the insulin gene enhancer. May be involved in subtype specialization of primary motoneurons. This chain is Insulin gene enhancer protein isl-2a (isl2a), found in Danio rerio (Zebrafish).